Here is an 889-residue protein sequence, read N- to C-terminus: Envelope glycoprotein gp160 (889 aa).

The first 22 residues, 1 to 22 (MGCLGNQLLIALLLLSASGIYC), serve as a signal peptide directing secretion. Residues 23 to 704 (VQYVTVFYGI…TSWIKYIQYG (682 aa)) lie on the Extracellular side of the membrane. A glycan (N-linked (GlcNAc...) asparagine; by host) is linked at Asn-37. Cys-44 and Cys-57 are disulfide-bonded. N-linked (GlcNAc...) asparagine; by host glycans are attached at residues Asn-70 and Asn-114. 5 disulfide bridges follow: Cys-101-Cys-226, Cys-108-Cys-217, Cys-113-Cys-175, Cys-239-Cys-269, and Cys-249-Cys-261. The tract at residues 113–174 (CNKSETDRWG…TGLEQEPMVS (62 aa)) is V1. The segment at 120-145 (RWGLTGTPAPTTTQTTTTQASTTPTS) is disordered. Low complexity predominate over residues 126-145 (TPAPTTTQTTTTQASTTPTS). Asn-153, Asn-163, Asn-178, Asn-191, Asn-206, Asn-218, Asn-250, Asn-253, Asn-260, Asn-284, Asn-290, Asn-301, Asn-312, Asn-322, Asn-377, Asn-422, Asn-470, Asn-486, and Asn-489 each carry an N-linked (GlcNAc...) asparagine; by host glycan. Positions 175 to 217 (CKFNMTGLKRDKKREYNETWYSRDLVCEQNSNETDSKCYMNHC) are V2. Residues 317–349 (CRRPGNKTVLPVTIMSGLVFHSQPINERPKQAW) are V3. A disulfide bond links Cys-317 and Cys-350. 2 disulfides stabilise this stretch: Cys-401–Cys-469 and Cys-408–Cys-442. A V4 region spans residues 408–442 (CKMNWFLNWVENIQNGSRWTSQNQKERQRRNYVPC). Residues 485–492 (GNETNITM) are V5. The tract at residues 536–556 (GVFVLGFLGFLATAGSAMSAA) is fusion peptide. Positions 599–615 (LQTRVTAIEKYLKDQAQ) are immunosuppression. Residues Asn-635, Asn-644, and Asn-660 are each glycosylated (N-linked (GlcNAc...) asparagine; by host). Positions 648–675 (QEWEKQVNFLEANITQSLEEAQIQQEKN) form a coiled coil. The tract at residues 681 to 702 (KLNSWDIFGNWFDLTSWIKYIQ) is MPER; binding to GalCer. The chain crosses the membrane as a helical span at residues 705-725 (VLIVLGVIGLRIVIYVVQMLA). Residues 726–889 (RLRQGYRPVF…IRQGLELTLL (164 aa)) are Cytoplasmic-facing. The short motif at 731–734 (YRPV) is the YXXV motif; contains endocytosis signal element. Cys-797 carries S-palmitoyl cysteine; by host lipidation. A Di-leucine internalization motif motif is present at residues 888 to 889 (LL).

The mature envelope protein (Env) consists of a homotrimer of non-covalently associated gp120-gp41 heterodimers. The resulting complex protrudes from the virus surface as a spike. Interacts with host CD4 and CCR5. Gp120 also interacts with the C-type lectins CD209/DC-SIGN and CLEC4M/DC-SIGNR (collectively referred to as DC-SIGN(R)). In terms of assembly, the mature envelope protein (Env) consists of a homotrimer of non-covalently associated gp120-gp41 heterodimers. The resulting complex protrudes from the virus surface as a spike. Specific enzymatic cleavages in vivo yield mature proteins. Envelope glycoproteins are synthesized as an inactive precursor that is heavily N-glycosylated and processed likely by host cell furin in the Golgi to yield the mature SU and TM proteins. The cleavage site between SU and TM requires the minimal sequence [KR]-X-[KR]-R. Post-translationally, palmitoylation of the transmembrane protein and of Env polyprotein (prior to its proteolytic cleavage) is essential for their association with host cell membrane lipid rafts. Palmitoylation is therefore required for envelope trafficking to classical lipid rafts, but not for viral replication.

The protein resides in the virion membrane. It localises to the host cell membrane. It is found in the host endosome membrane. Functionally, the surface protein gp120 (SU) attaches the virus to the host lymphoid cell by binding to the primary receptor CD4. This interaction induces a structural rearrangement creating a high affinity binding site for a chemokine coreceptor like CCR5. This peculiar 2 stage receptor-interaction strategy allows gp120 to maintain the highly conserved coreceptor-binding site in a cryptic conformation, protected from neutralizing antibodies. These changes are transmitted to the transmembrane protein gp41 and are thought to activate its fusogenic potential by unmasking its fusion peptide. In terms of biological role, surface protein gp120 (SU) may target the virus to gut-associated lymphoid tissue (GALT) by binding host ITGA4/ITGB7 (alpha-4/beta-7 integrins), a complex that mediates T-cell migration to the GALT. Interaction between gp120 and ITGA4/ITGB7 would allow the virus to enter GALT early in the infection, infecting and killing most of GALT's resting CD4+ T-cells. This T-cell depletion is believed to be the major insult to the host immune system leading to AIDS. Its function is as follows. The surface protein gp120 is a ligand for CD209/DC-SIGN and CLEC4M/DC-SIGNR, which are respectively found on dendritic cells (DCs), and on endothelial cells of liver sinusoids and lymph node sinuses. These interactions allow capture of viral particles at mucosal surfaces by these cells and subsequent transmission to permissive cells. DCs are professional antigen presenting cells, critical for host immunity by inducing specific immune responses against a broad variety of pathogens. They act as sentinels in various tissues where they take up antigen, process it, and present it to T-cells following migration to lymphoid organs. SIV subverts the migration properties of dendritic cells to gain access to CD4+ T-cells in lymph nodes. Virus transmission to permissive T-cells occurs either in trans (without DCs infection, through viral capture and transmission), or in cis (following DCs productive infection, through the usual CD4-gp120 interaction), thereby inducing a robust infection. In trans infection, bound virions remain infectious over days and it is proposed that they are not degraded, but protected in non-lysosomal acidic organelles within the DCs close to the cell membrane thus contributing to the viral infectious potential during DCs' migration from the periphery to the lymphoid tissues. On arrival at lymphoid tissues, intact virions recycle back to DCs' cell surface allowing virus transmission to CD4+ T-cells. Virion capture also seems to lead to MHC-II-restricted viral antigen presentation, and probably to the activation of SIV-specific CD4+ cells. The transmembrane protein gp41 (TM) acts as a class I viral fusion protein. Under the current model, the protein has at least 3 conformational states: pre-fusion native state, pre-hairpin intermediate state, and post-fusion hairpin state. During fusion of viral and target intracellular membranes, the coiled coil regions (heptad repeats) assume a trimer-of-hairpins structure, positioning the fusion peptide in close proximity to the C-terminal region of the ectodomain. The formation of this structure appears to drive apposition and subsequent fusion of viral and target cell membranes. Complete fusion occurs in host cell endosomes. The virus undergoes clathrin-dependent internalization long before endosomal fusion, thus minimizing the surface exposure of conserved viral epitopes during fusion and reducing the efficacy of inhibitors targeting these epitopes. Membranes fusion leads to delivery of the nucleocapsid into the cytoplasm. Functionally, the envelope glycoprotein gp160 precursor down-modulates cell surface CD4 antigen by interacting with it in the endoplasmic reticulum and blocking its transport to the cell surface. In terms of biological role, the gp120-gp41 heterodimer allows rapid transcytosis of the virus through CD4 negative cells such as simple epithelial monolayers of the intestinal, rectal and endocervical epithelial barriers. Both gp120 and gp41 specifically recognize glycosphingolipids galactosyl-ceramide (GalCer) or 3' sulfo-galactosyl-ceramide (GalS) present in the lipid rafts structures of epithelial cells. Binding to these alternative receptors allows the rapid transcytosis of the virus through the epithelial cells. This transcytotic vesicle-mediated transport of virions from the apical side to the basolateral side of the epithelial cells does not involve infection of the cells themselves. The chain is Envelope glycoprotein gp160 (env) from Simian immunodeficiency virus (isolate PBj14/BCL-3) (SIV-sm).